A 357-amino-acid polypeptide reads, in one-letter code: RNA-binding protein 43 (357 aa).

An RRM domain is found at Arg-15 to Asp-104.

The chain is RNA-binding protein 43 (RBM43) from Homo sapiens (Human).